The sequence spans 82 residues: Small ribosomal subunit protein uS17 (82 aa).

The protein belongs to the universal ribosomal protein uS17 family. In terms of assembly, part of the 30S ribosomal subunit.

Its function is as follows. One of the primary rRNA binding proteins, it binds specifically to the 5'-end of 16S ribosomal RNA. The polypeptide is Small ribosomal subunit protein uS17 (Tolumonas auensis (strain DSM 9187 / NBRC 110442 / TA 4)).